The chain runs to 256 residues: ATP synthase subunit a (256 aa).

Positions 1 to 7 (MLNLFIT) are cleaved as a propeptide — removed in mature form. A run of 6 helical transmembrane segments spans residues 33–53 (FTTF…LNLL), 92–112 (YFPL…ISMI), 122–142 (LIFI…IGLT), 148–168 (FFSL…LVLI), 188–208 (VLSG…LMSM), and 209–229 (SIIT…IVVL).

The protein belongs to the ATPase A chain family. In terms of assembly, F-type ATPases have 2 components, CF(1) - the catalytic core - and CF(0) - the membrane proton channel. CF(1) has five subunits: alpha(3), beta(3), gamma(1), delta(1), epsilon(1). CF(0) has three main subunits: a, b and c.

It is found in the mitochondrion inner membrane. In terms of biological role, mitochondrial membrane ATP synthase (F(1)F(0) ATP synthase or Complex V) produces ATP from ADP in the presence of a proton gradient across the membrane which is generated by electron transport complexes of the respiratory chain. F-type ATPases consist of two structural domains, F(1) - containing the extramembraneous catalytic core and F(0) - containing the membrane proton channel, linked together by a central stalk and a peripheral stalk. During catalysis, ATP synthesis in the catalytic domain of F(1) is coupled via a rotary mechanism of the central stalk subunits to proton translocation. Key component of the proton channel; it may play a direct role in the translocation of protons across the membrane. This is ATP synthase subunit a (ATP6) from Kluyveromyces lactis (strain ATCC 8585 / CBS 2359 / DSM 70799 / NBRC 1267 / NRRL Y-1140 / WM37) (Yeast).